Here is a 342-residue protein sequence, read N- to C-terminus: uncharacterized protein (342 aa).

A run of 3 helical transmembrane segments spans residues 35–55, 134–154, and 161–180; these read YFRV…WCFS, LLFL…IIYF, and LFIT…YCFS. Disordered stretches follow at residues 198–220 and 311–342; these read SSDN…QQYN and IINN…NYTN.

The protein resides in the membrane. This is an uncharacterized protein from Dictyostelium discoideum (Social amoeba).